Consider the following 195-residue polypeptide: Small ribosomal subunit protein uS4c (195 aa).

Residues 82 to 143 form the S4 RNA-binding domain; that stretch reads MRLDNILFRL…KQRSKALIQN (62 aa).

This sequence belongs to the universal ribosomal protein uS4 family. As to quaternary structure, part of the 30S ribosomal subunit. Contacts protein S5. The interaction surface between S4 and S5 is involved in control of translational fidelity.

The protein localises to the plastid. It localises to the chloroplast. In terms of biological role, one of the primary rRNA binding proteins, it binds directly to 16S rRNA where it nucleates assembly of the body of the 30S subunit. Its function is as follows. With S5 and S12 plays an important role in translational accuracy. The polypeptide is Small ribosomal subunit protein uS4c (rps4) (Pillansia templemannii).